The sequence spans 249 residues: MVDFRKFYKENANVAYTVLGYPNLQISEAFLQRLDQSPIDILELGVAYSDPIADGEIIADAAKIALDQGVDIHSVFELLARIKTKKALVFMVYYNLIFSYGLEKFVKKAKSLGICALIVPELSFEESDDLVKECEKYNIALITLVSVTTPKERVKKLVKHAKGFIYLLASIGITGTKSVEEAILQDKVKEIRSFTNLPIFVGFGIQNNQDVKRMRKVADGVIVGTSIVKYFKQENLDIIMKDIEEIFKK.

Residues Glu-43 and Asp-54 each act as proton acceptor in the active site.

Belongs to the TrpA family. In terms of assembly, tetramer of two alpha and two beta chains.

The enzyme catalyses (1S,2R)-1-C-(indol-3-yl)glycerol 3-phosphate + L-serine = D-glyceraldehyde 3-phosphate + L-tryptophan + H2O. The protein operates within amino-acid biosynthesis; L-tryptophan biosynthesis; L-tryptophan from chorismate: step 5/5. The alpha subunit is responsible for the aldol cleavage of indoleglycerol phosphate to indole and glyceraldehyde 3-phosphate. The polypeptide is Tryptophan synthase alpha chain (Campylobacter jejuni subsp. doylei (strain ATCC BAA-1458 / RM4099 / 269.97)).